A 447-amino-acid chain; its full sequence is Phosphoglucosamine mutase (447 aa).

Serine 102 acts as the Phosphoserine intermediate in catalysis. Mg(2+) contacts are provided by serine 102, aspartate 241, aspartate 243, and aspartate 245. The residue at position 102 (serine 102) is a Phosphoserine.

It belongs to the phosphohexose mutase family. Mg(2+) serves as cofactor. Post-translationally, activated by phosphorylation.

The enzyme catalyses alpha-D-glucosamine 1-phosphate = D-glucosamine 6-phosphate. Functionally, catalyzes the conversion of glucosamine-6-phosphate to glucosamine-1-phosphate. This is Phosphoglucosamine mutase from Pseudomonas savastanoi pv. phaseolicola (strain 1448A / Race 6) (Pseudomonas syringae pv. phaseolicola (strain 1448A / Race 6)).